Consider the following 115-residue polypeptide: MRVGCDIIAISRIEKIHSRHGKNFLDKFLSPKEQILIKNPATLAGLWAAKEAASKALGVGICELCSFFDIEISKDEKNAPKLKYSQKITKNFNITQTSLSISHDNGFAIAIVAIV.

D6 and E51 together coordinate Mg(2+).

Belongs to the P-Pant transferase superfamily. AcpS family. Mg(2+) is required as a cofactor.

The protein localises to the cytoplasm. It catalyses the reaction apo-[ACP] + CoA = holo-[ACP] + adenosine 3',5'-bisphosphate + H(+). Functionally, transfers the 4'-phosphopantetheine moiety from coenzyme A to a Ser of acyl-carrier-protein. The polypeptide is Holo-[acyl-carrier-protein] synthase (Campylobacter jejuni subsp. jejuni serotype O:6 (strain 81116 / NCTC 11828)).